The following is a 549-amino-acid chain: Membrane protein insertase YidC (549 aa).

The helical transmembrane segment at 8–28 (VLLATVLSVAVLIVWQFVFPS) threads the bilayer. Residues 29–39 (PKPKPQPPKPP) show a composition bias toward pro residues. A disordered region spans residues 29-68 (PKPKPQPPKPPEAAQRAEAPAAPAPGQPAAQAPAPAVPQD). Composition is skewed to low complexity over residues 40–49 (EAAQRAEAPA) and 55–68 (QPAAQAPAPAVPQD). The next 4 membrane-spanning stretches (helical) occupy residues 328-348 (IDYGAMARPFAFFARLLLFVM), 354-374 (LVANWGLAIILLTVLVKVLLY), 424-444 (LGGCLPMLIQLPIWFALYATL), and 502-522 (PGFFTLLMLSVPAGLTLYIFV).

This sequence belongs to the OXA1/ALB3/YidC family. Type 1 subfamily. In terms of assembly, interacts with the Sec translocase complex via SecD. Specifically interacts with transmembrane segments of nascent integral membrane proteins during membrane integration.

Its subcellular location is the cell inner membrane. In terms of biological role, required for the insertion and/or proper folding and/or complex formation of integral membrane proteins into the membrane. Involved in integration of membrane proteins that insert both dependently and independently of the Sec translocase complex, as well as at least some lipoproteins. Aids folding of multispanning membrane proteins. The sequence is that of Membrane protein insertase YidC from Anaeromyxobacter sp. (strain Fw109-5).